Here is a 255-residue protein sequence, read N- to C-terminus: Flap endonuclease Xni (255 aa).

Asp-105 is a binding site for Mg(2+). The region spanning 162 to 254 (EHKQFIDYLA…LKQFRLPKAN (93 aa)) is the 5'-3' exonuclease domain. K(+) is bound by residues Leu-172, Ala-173, Pro-181, Val-183, and Ile-186. The tract at residues 185-190 (GIGPKS) is interaction with DNA.

This sequence belongs to the Xni family. It depends on Mg(2+) as a cofactor. Requires K(+) as cofactor.

In terms of biological role, has flap endonuclease activity. During DNA replication, flap endonucleases cleave the 5'-overhanging flap structure that is generated by displacement synthesis when DNA polymerase encounters the 5'-end of a downstream Okazaki fragment. This is Flap endonuclease Xni from Shewanella piezotolerans (strain WP3 / JCM 13877).